The chain runs to 497 residues: Ethanolamine-phosphate phospho-lyase (497 aa).

Position 278 is an N6-(pyridoxal phosphate)lysine (Lys-278). The interval 440 to 497 is disordered; it reads TGAETESGISKNTPCRTKMPKEAQSELLRDSSLESRENPSQKRNGLCTDSLLSKRLRT. Positions 458 to 479 are enriched in basic and acidic residues; it reads MPKEAQSELLRDSSLESRENPS.

The protein belongs to the class-III pyridoxal-phosphate-dependent aminotransferase family. As to quaternary structure, homotetramer. It depends on pyridoxal 5'-phosphate as a cofactor.

It is found in the mitochondrion. It catalyses the reaction phosphoethanolamine + H2O = acetaldehyde + NH4(+) + phosphate. Catalyzes the pyridoxal-phosphate-dependent breakdown of phosphoethanolamine, converting it to ammonia, inorganic phosphate and acetaldehyde. This chain is Ethanolamine-phosphate phospho-lyase (ETNPPL), found in Bos taurus (Bovine).